A 356-amino-acid chain; its full sequence is Homoserine O-succinyltransferase (356 aa).

C146 (acyl-thioester intermediate) is an active-site residue. The substrate site is built by K167 and S196. Residue H239 is the Proton acceptor of the active site. E241 is an active-site residue. Substrate is bound at residue R253.

This sequence belongs to the MetA family.

It is found in the cytoplasm. The enzyme catalyses L-homoserine + succinyl-CoA = O-succinyl-L-homoserine + CoA. The protein operates within amino-acid biosynthesis; L-methionine biosynthesis via de novo pathway; O-succinyl-L-homoserine from L-homoserine: step 1/1. Transfers a succinyl group from succinyl-CoA to L-homoserine, forming succinyl-L-homoserine. In Thioalkalivibrio nitratireducens (strain DSM 14787 / UNIQEM 213 / ALEN2), this protein is Homoserine O-succinyltransferase.